Reading from the N-terminus, the 194-residue chain is Imidazoleglycerol-phosphate dehydratase (194 aa).

It belongs to the imidazoleglycerol-phosphate dehydratase family.

Its subcellular location is the cytoplasm. The catalysed reaction is D-erythro-1-(imidazol-4-yl)glycerol 3-phosphate = 3-(imidazol-4-yl)-2-oxopropyl phosphate + H2O. The protein operates within amino-acid biosynthesis; L-histidine biosynthesis; L-histidine from 5-phospho-alpha-D-ribose 1-diphosphate: step 6/9. The protein is Imidazoleglycerol-phosphate dehydratase of Lactiplantibacillus plantarum (strain ATCC BAA-793 / NCIMB 8826 / WCFS1) (Lactobacillus plantarum).